We begin with the raw amino-acid sequence, 61 residues long: Small ribosomal subunit protein uS14B (61 aa).

Zn(2+) is bound by residues cysteine 24, cysteine 27, cysteine 40, and cysteine 43.

Belongs to the universal ribosomal protein uS14 family. Zinc-binding uS14 subfamily. In terms of assembly, part of the 30S ribosomal subunit. Contacts proteins S3 and S10. Requires Zn(2+) as cofactor.

Its function is as follows. Binds 16S rRNA, required for the assembly of 30S particles and may also be responsible for determining the conformation of the 16S rRNA at the A site. The sequence is that of Small ribosomal subunit protein uS14B from Shouchella clausii (strain KSM-K16) (Alkalihalobacillus clausii).